The chain runs to 149 residues: Ribonuclease H (149 aa).

The RNase H type-1 domain occupies 1–142 (MSDSVELFTD…ADQLANRGVD (142 aa)). Mg(2+)-binding residues include aspartate 10, glutamate 48, aspartate 70, and aspartate 134.

This sequence belongs to the RNase H family. In terms of assembly, monomer. The cofactor is Mg(2+).

The protein localises to the cytoplasm. It carries out the reaction Endonucleolytic cleavage to 5'-phosphomonoester.. Its function is as follows. Endonuclease that specifically degrades the RNA of RNA-DNA hybrids. This Pseudomonas savastanoi pv. phaseolicola (strain 1448A / Race 6) (Pseudomonas syringae pv. phaseolicola (strain 1448A / Race 6)) protein is Ribonuclease H.